The primary structure comprises 275 residues: Dermonecrotic toxin SpaSicTox-betaIIA2 (275 aa).

His5 is an active-site residue. Residues Glu25 and Asp27 each contribute to the Mg(2+) site. His41 serves as the catalytic Nucleophile. Disulfide bonds link Cys45–Cys51 and Cys47–Cys190. Asp85 contacts Mg(2+).

This sequence belongs to the arthropod phospholipase D family. Class II subfamily. Mg(2+) is required as a cofactor. Expressed by the venom gland.

It localises to the secreted. It carries out the reaction an N-(acyl)-sphingosylphosphocholine = an N-(acyl)-sphingosyl-1,3-cyclic phosphate + choline. The catalysed reaction is an N-(acyl)-sphingosylphosphoethanolamine = an N-(acyl)-sphingosyl-1,3-cyclic phosphate + ethanolamine. The enzyme catalyses a 1-acyl-sn-glycero-3-phosphocholine = a 1-acyl-sn-glycero-2,3-cyclic phosphate + choline. It catalyses the reaction a 1-acyl-sn-glycero-3-phosphoethanolamine = a 1-acyl-sn-glycero-2,3-cyclic phosphate + ethanolamine. Its function is as follows. Dermonecrotic toxins cleave the phosphodiester linkage between the phosphate and headgroup of certain phospholipids (sphingolipid and lysolipid substrates), forming an alcohol (often choline) and a cyclic phosphate. This toxin acts on sphingomyelin (SM). It may also act on ceramide phosphoethanolamine (CPE), lysophosphatidylcholine (LPC) and lysophosphatidylethanolamine (LPE), but not on lysophosphatidylserine (LPS), and lysophosphatidylglycerol (LPG). It acts by transphosphatidylation, releasing exclusively cyclic phosphate products as second products. Induces dermonecrosis, hemolysis, increased vascular permeability, edema, inflammatory response, and platelet aggregation. The chain is Dermonecrotic toxin SpaSicTox-betaIIA2 from Sicarius patagonicus (Six-eyed sand spider).